The primary structure comprises 319 residues: GTPase Era (319 aa).

In terms of domain architecture, Era-type G spans 9–196 (RSGVSLIIGR…MRTLRDLLPE (188 aa)). A G1 region spans residues 17 to 24 (GRPSSGKS). 17–24 (GRPSSGKS) serves as a coordination point for GTP. A G2 region spans residues 43–47 (QTTRN). The G3 stretch occupies residues 64-67 (DTPG). GTP is bound by residues 64–68 (DTPGY) and 127–130 (NKVD). The segment at 127-130 (NKVD) is G4. Residues 175 to 177 (ISA) are G5. The 77-residue stretch at 227-303 (CRDELPHALY…HISLDIRVKV (77 aa)) folds into the KH type-2 domain.

This sequence belongs to the TRAFAC class TrmE-Era-EngA-EngB-Septin-like GTPase superfamily. Era GTPase family. Monomer.

The protein localises to the cytoplasm. Its subcellular location is the cell inner membrane. An essential GTPase that binds both GDP and GTP, with rapid nucleotide exchange. Plays a role in 16S rRNA processing and 30S ribosomal subunit biogenesis and possibly also in cell cycle regulation and energy metabolism. The sequence is that of GTPase Era from Treponema pallidum (strain Nichols).